The following is a 291-amino-acid chain: MIMTNEATTPSGQPLGISHKPSKSGAMFTKFKAENKPAFIGYLPYGFPNPDVSLDAFKTMVEHGVDAVEIGLPYSDPVMDGPVIQAAASIALNNGETIKRVFEAVETVANAGGVPLIMSYWNLVYHYGVERFARDFENAGGAGLITPDLIPDEAGEWIEASDRHGLDRIFLVSPDSSTERLETVARNARGFVYAAARMGVTGERATIDASPELLVERTRQAGAENVCVGIGVSTAEQGAKVGSYADGVIVGSALVHTLLADDNKTARDPKEGLKLLAAKSEELAEGIHNAR.

Catalysis depends on proton acceptor residues E69 and D80.

It belongs to the TrpA family. In terms of assembly, tetramer of two alpha and two beta chains.

It catalyses the reaction (1S,2R)-1-C-(indol-3-yl)glycerol 3-phosphate + L-serine = D-glyceraldehyde 3-phosphate + L-tryptophan + H2O. Its pathway is amino-acid biosynthesis; L-tryptophan biosynthesis; L-tryptophan from chorismate: step 5/5. In terms of biological role, the alpha subunit is responsible for the aldol cleavage of indoleglycerol phosphate to indole and glyceraldehyde 3-phosphate. The polypeptide is Tryptophan synthase alpha chain (Bifidobacterium longum (strain NCC 2705)).